Reading from the N-terminus, the 243-residue chain is Probable transcriptional regulatory protein BP2308 (243 aa).

Positions 1–21 are disordered; sequence MAGHSKWANIQHRKGRQDAKR.

This sequence belongs to the TACO1 family.

Its subcellular location is the cytoplasm. The protein is Probable transcriptional regulatory protein BP2308 of Bordetella pertussis (strain Tohama I / ATCC BAA-589 / NCTC 13251).